Consider the following 138-residue polypeptide: Putative protein encoded by LINC02912 (138 aa).

Helical transmembrane passes span 32–52 and 65–85; these read FALSFLIGKMGIIILSVCLIC and CLINVSFSLYSCFIVFVTISQ. The disordered stretch occupies residues 109 to 138; it reads SGGQSQHSWPCPERSKNLPQVSKQLRNRAG.

The protein resides in the membrane. The protein is Putative protein encoded by LINC02912 of Homo sapiens (Human).